The sequence spans 397 residues: Argininosuccinate synthase (397 aa).

9–17 (AYSGGLDTS) is an ATP binding site. Residue Tyr-87 coordinates L-citrulline. Gly-117 is an ATP binding site. Residues Thr-119, Asn-123, and Asp-124 each coordinate L-aspartate. Residue Asn-123 coordinates L-citrulline. L-citrulline is bound by residues Arg-127, Ser-175, Ser-184, Glu-260, and Tyr-272.

Belongs to the argininosuccinate synthase family. Type 1 subfamily. As to quaternary structure, homotetramer.

It is found in the cytoplasm. It catalyses the reaction L-citrulline + L-aspartate + ATP = 2-(N(omega)-L-arginino)succinate + AMP + diphosphate + H(+). It functions in the pathway amino-acid biosynthesis; L-arginine biosynthesis; L-arginine from L-ornithine and carbamoyl phosphate: step 2/3. The protein is Argininosuccinate synthase of Methanococcus maripaludis (strain DSM 14266 / JCM 13030 / NBRC 101832 / S2 / LL).